The sequence spans 252 residues: Phosphate import ATP-binding protein PstB 1 (252 aa).

An ABC transporter domain is found at 6–247; the sequence is ISSKDLHLYY…PKEKQTEDYI (242 aa). An ATP-binding site is contributed by 38–45; sequence GPSGCGKS.

The protein belongs to the ABC transporter superfamily. Phosphate importer (TC 3.A.1.7) family. As to quaternary structure, the complex is composed of two ATP-binding proteins (PstB), two transmembrane proteins (PstC and PstA) and a solute-binding protein (PstS).

Its subcellular location is the cell membrane. The catalysed reaction is phosphate(out) + ATP + H2O = ADP + 2 phosphate(in) + H(+). Part of the ABC transporter complex PstSACB involved in phosphate import. Responsible for energy coupling to the transport system. The protein is Phosphate import ATP-binding protein PstB 1 of Enterococcus faecalis (strain ATCC 700802 / V583).